The following is a 147-amino-acid chain: Phospholipase A2 inhibitor subunit A (147 aa).

One can recognise a C-type lectin domain in the interval 62–143; that stretch reads EICRQAGGRI…DDNLLVVCEF (82 aa). Disulfide bonds link Cys64/Cys141 and Cys119/Cys133. Asn103 carries an N-linked (GlcNAc...) asparagine glycan.

It belongs to the alpha-type phospholipase A2 inhibitor family. As to quaternary structure, homotrimer; non-covalently linked. Post-translationally, glycosylated. As to expression, expressed by the liver.

Its subcellular location is the secreted. Functionally, inhibits the enzymatic activity of the acidic phospholipase A2 (PLA2). This is Phospholipase A2 inhibitor subunit A from Gloydius brevicaudus siniticus (Chinese mamushi).